A 188-amino-acid polypeptide reads, in one-letter code: Ribosome-recycling factor (188 aa).

Belongs to the RRF family.

Its subcellular location is the cytoplasm. Its function is as follows. Responsible for the release of ribosomes from messenger RNA at the termination of protein biosynthesis. May increase the efficiency of translation by recycling ribosomes from one round of translation to another. This is Ribosome-recycling factor from Acidiphilium cryptum (strain JF-5).